The chain runs to 220 residues: Deoxyribose-phosphate aldolase 1 (220 aa).

The active-site Proton donor/acceptor is Asp89. Lys151 (schiff-base intermediate with acetaldehyde) is an active-site residue. The Proton donor/acceptor role is filled by Lys180.

Belongs to the DeoC/FbaB aldolase family. DeoC type 1 subfamily.

It localises to the cytoplasm. The catalysed reaction is 2-deoxy-D-ribose 5-phosphate = D-glyceraldehyde 3-phosphate + acetaldehyde. Its pathway is carbohydrate degradation; 2-deoxy-D-ribose 1-phosphate degradation; D-glyceraldehyde 3-phosphate and acetaldehyde from 2-deoxy-alpha-D-ribose 1-phosphate: step 2/2. Functionally, catalyzes a reversible aldol reaction between acetaldehyde and D-glyceraldehyde 3-phosphate to generate 2-deoxy-D-ribose 5-phosphate. This is Deoxyribose-phosphate aldolase 1 from Mesoplasma florum (strain ATCC 33453 / NBRC 100688 / NCTC 11704 / L1) (Acholeplasma florum).